The following is a 220-amino-acid chain: GTP cyclohydrolase 1 (220 aa).

Zn(2+)-binding residues include C109, H112, and C180.

Belongs to the GTP cyclohydrolase I family. As to quaternary structure, toroid-shaped homodecamer, composed of two pentamers of five dimers.

It catalyses the reaction GTP + H2O = 7,8-dihydroneopterin 3'-triphosphate + formate + H(+). It participates in cofactor biosynthesis; 7,8-dihydroneopterin triphosphate biosynthesis; 7,8-dihydroneopterin triphosphate from GTP: step 1/1. This is GTP cyclohydrolase 1 from Yersinia pseudotuberculosis serotype O:1b (strain IP 31758).